We begin with the raw amino-acid sequence, 73 residues long: DNA-directed RNA polymerase subunit Rpo10 (73 aa).

Residues cysteine 7, cysteine 10, cysteine 44, and cysteine 45 each coordinate Zn(2+).

The protein belongs to the archaeal Rpo10/eukaryotic RPB10 RNA polymerase subunit family. In terms of assembly, part of the RNA polymerase complex. Forms an Rpo3-Rpo10-Rpo11-Rpo12 complex upon coexpression. It depends on Zn(2+) as a cofactor.

Its subcellular location is the cytoplasm. It carries out the reaction RNA(n) + a ribonucleoside 5'-triphosphate = RNA(n+1) + diphosphate. DNA-dependent RNA polymerase (RNAP) catalyzes the transcription of DNA into RNA using the four ribonucleoside triphosphates as substrates. The sequence is that of DNA-directed RNA polymerase subunit Rpo10 from Methanocaldococcus jannaschii (strain ATCC 43067 / DSM 2661 / JAL-1 / JCM 10045 / NBRC 100440) (Methanococcus jannaschii).